Here is a 252-residue protein sequence, read N- to C-terminus: Chitooligosaccharide deacetylase (252 aa).

Residues His61 and His125 each contribute to the Mg(2+) site.

It belongs to the YdjC deacetylase family. ChbG subfamily. As to quaternary structure, homodimer. Mg(2+) serves as cofactor.

The protein localises to the cytoplasm. The enzyme catalyses N,N'-diacetylchitobiose + H2O = N-acetyl-beta-D-glucosaminyl-(1-&gt;4)-D-glucosamine + acetate. The catalysed reaction is diacetylchitobiose-6'-phosphate + H2O = N'-monoacetylchitobiose-6'-phosphate + acetate. The protein operates within glycan degradation; chitin degradation. Functionally, involved in the degradation of chitin. ChbG is essential for growth on the acetylated chitooligosaccharides chitobiose and chitotriose but is dispensable for growth on cellobiose and chitosan dimer, the deacetylated form of chitobiose. Deacetylation of chitobiose-6-P and chitotriose-6-P is necessary for both the activation of the chb promoter by the regulatory protein ChbR and the hydrolysis of phosphorylated beta-glucosides by the phospho-beta-glucosidase ChbF. Catalyzes the removal of only one acetyl group from chitobiose-6-P to yield monoacetylchitobiose-6-P, the inducer of ChbR and the substrate of ChbF. This chain is Chitooligosaccharide deacetylase, found in Salmonella enteritidis PT4 (strain P125109).